A 447-amino-acid chain; its full sequence is Phosphoglucosamine mutase (447 aa).

The active-site Phosphoserine intermediate is serine 102. Positions 102, 241, 243, and 245 each coordinate Mg(2+). A Phosphoserine modification is found at serine 102.

This sequence belongs to the phosphohexose mutase family. It depends on Mg(2+) as a cofactor. Activated by phosphorylation.

It catalyses the reaction alpha-D-glucosamine 1-phosphate = D-glucosamine 6-phosphate. Catalyzes the conversion of glucosamine-6-phosphate to glucosamine-1-phosphate. The polypeptide is Phosphoglucosamine mutase (Pseudomonas syringae pv. syringae (strain B728a)).